The primary structure comprises 170 residues: Centrin-2 (170 aa).

Residues 1-21 form a disordered region; that stretch reads MQRGALRGASPTARRRLVDRP. EF-hand domains follow at residues 26 to 61, 62 to 97, 99 to 134, and 135 to 170; these read DEIE…LGFE, TKNP…KLGD, ESRE…LGET, and MSED…KTFP. Ca(2+) contacts are provided by aspartate 39, aspartate 41, serine 43, methionine 45, and glutamate 50.

It belongs to the centrin family. Monomer. Does not homooligomerize.

It localises to the cytoplasm. The protein localises to the cytoskeleton. It is found in the microtubule organizing center. Its subcellular location is the centrosome. Its function is as follows. In tachyzoites, plays an essential role in microneme secretion that ensures parasite motility and attachment to, invasion of and egress from host cells. Also involved in the architecture of the peripheral annuli where it appears to regulate the localization of PAP2. In association with the myosin motor MyoJ, involved in the constriction of the basal complex at the end of daughter cell division in an actin-dependent manner; the basal complex is a cytoskeletal structure formed at the tachyzoite basal pole during daughter cell formation. May be involved in parasite replication. The chain is Centrin-2 from Toxoplasma gondii (strain ATCC 50611 / Me49).